The primary structure comprises 163 residues: Putative ribose 5-phosphate isomerase (163 aa).

16–17 (DD) contacts D-ribulose 5-phosphate. The active-site Proton acceptor is cysteine 76. D-ribulose 5-phosphate-binding positions include 77-81 (GTGLG), asparagine 110, arginine 120, and lysine 148.

It belongs to the LacAB/RpiB family. Homodimer or homotetramer.

The polypeptide is Putative ribose 5-phosphate isomerase (Coccidioides immitis (strain RS) (Valley fever fungus)).